The sequence spans 141 residues: Cystatin (141 aa).

The N-terminal stretch at 1–26 (MVHSQLPVAAPLRLLCALLLLPSATM) is a signal peptide. Positions 29-129 (GGLSPRSVTD…CHFQVWSRPW (101 aa)) constitute a Cystatin domain. Positions 73–77 (QVVAG) match the Secondary area of contact motif. 2 disulfide bridges follow: C91/C107 and C120/C140.

It belongs to the cystatin family. As to expression, expressed at a low level by the venom gland (at protein level).

It localises to the secreted. Inhibits various C1 cysteine proteases including cathepsin L, papain and cathepsin B. This protein has no toxic activity and its function in the venom is unknown. It may play a role as a housekeeping or regulatory protein. The chain is Cystatin from Oxyuranus scutellatus scutellatus (Australian taipan).